We begin with the raw amino-acid sequence, 344 residues long: Inositol 2-dehydrogenase/D-chiro-inositol 3-dehydrogenase (344 aa).

This sequence belongs to the Gfo/Idh/MocA family. Homotetramer.

It carries out the reaction myo-inositol + NAD(+) = scyllo-inosose + NADH + H(+). The enzyme catalyses 1D-chiro-inositol + NAD(+) = scyllo-inosine + NADH + H(+). Its pathway is polyol metabolism; myo-inositol degradation into acetyl-CoA; acetyl-CoA from myo-inositol: step 1/7. Its function is as follows. Involved in the oxidation of myo-inositol (MI) and D-chiro-inositol (DCI) to 2-keto-myo-inositol (2KMI or 2-inosose) and 1-keto-D-chiro-inositol (1KDCI), respectively. This chain is Inositol 2-dehydrogenase/D-chiro-inositol 3-dehydrogenase, found in Bacillus licheniformis (strain ATCC 14580 / DSM 13 / JCM 2505 / CCUG 7422 / NBRC 12200 / NCIMB 9375 / NCTC 10341 / NRRL NRS-1264 / Gibson 46).